The following is a 285-amino-acid chain: sn-2 palmitoyl-lipid 9-desaturase (285 aa).

2 consecutive transmembrane segments (helical) span residues 20 to 40 and 44 to 64; these read WINV…PWFF and ALGL…CLGY. The Histidine box-1 motif lies at 65–70; it reads HRLLSH. Residues 81-101 traverse the membrane as a helical segment; the sequence is YAIALIGALALQGGPIFWVGG. Positions 102 to 106 match the Histidine box-2 motif; the sequence is HRQHH. The helical transmembrane segment at 169 to 189 threads the bilayer; sequence IPFALLLYVLGGWPFVFYGVF. A Histidine box-3 motif is present at residues 239–243; that stretch reads HHTYP.

It belongs to the fatty acid desaturase type 2 family. It depends on Fe(2+) as a cofactor.

It localises to the membrane. It catalyses the reaction a 1-acyl-2-hexadecanoyl-glycerolipid + 2 reduced [2Fe-2S]-[ferredoxin] + O2 + 2 H(+) = a 1-acyl-2-[(9Z)-hexadecenoyl]-glycerolipid + 2 oxidized [2Fe-2S]-[ferredoxin] + 2 H2O. Its pathway is lipid metabolism; fatty acid biosynthesis. Its function is as follows. Desaturase involved in fatty acid biosynthesis. Introduces a double bond at carbon 9 of palmitoyl groups (16:0) attached to the sn-2 position of the glycerol moiety of membrane glycerolipids. This chain is sn-2 palmitoyl-lipid 9-desaturase, found in Nostoc sp. (strain 36).